Consider the following 308-residue polypeptide: Probable D,D-dipeptide transport ATP-binding protein DdpF (308 aa).

Positions 8 to 243 (LRDVHINFPA…PAHPYTRLLL (236 aa)) constitute an ABC transporter domain. ATP is bound at residue 49–56 (GESGCGKS).

It belongs to the ABC transporter superfamily. The complex is composed of two ATP-binding proteins (DdpD and DdpF), two transmembrane proteins (DdpB and DdpC) and a solute-binding protein (DdpA).

Its subcellular location is the cell inner membrane. In terms of biological role, part of the ABC transporter complex DdpABCDF, which is probably involved in D,D-dipeptide transport. Probably responsible for energy coupling to the transport system. This chain is Probable D,D-dipeptide transport ATP-binding protein DdpF, found in Escherichia coli (strain K12).